The following is a 161-amino-acid chain: Nucleotide-binding protein Shewmr4_3156 (161 aa).

This sequence belongs to the YajQ family.

Its function is as follows. Nucleotide-binding protein. The sequence is that of Nucleotide-binding protein Shewmr4_3156 from Shewanella sp. (strain MR-4).